The chain runs to 315 residues: Putative HTH-type transcriptional regulatory protein PF1851 (315 aa).

Positions 131 to 189 constitute an HTH cro/C1-type domain; the sequence is LRELREKYGYSTTELAEMLGVSRKSVQRYEKGEGMVSIDVAIRLEEIFDEPLVKPIDIF. A DNA-binding region (H-T-H motif) is located at residues 142-161; that stretch reads TTELAEMLGVSRKSVQRYEK.

This is Putative HTH-type transcriptional regulatory protein PF1851 from Pyrococcus furiosus (strain ATCC 43587 / DSM 3638 / JCM 8422 / Vc1).